The following is a 1021-amino-acid chain: tRNA wybutosine-synthesizing protein 4 (1021 aa).

Residues arginine 68, aspartate 122, 171–172 (DL), and glutamate 198 contribute to the S-adenosyl-L-methionine site. A JmjC domain is found at 826 to 980 (PTEAPANLAE…STGRDVYGNR (155 aa)).

Belongs to the methyltransferase superfamily. LCMT family.

The catalysed reaction is 7-[(3S)-3-amino-3-carboxypropyl]wyosine(37) in tRNA(Phe) + S-adenosyl-L-methionine = 7-[(3S)-(3-amino-3-methoxycarbonyl)propyl]wyosine(37) in tRNA(Phe) + S-adenosyl-L-homocysteine. It catalyses the reaction 7-[(3S)-(3-amino-3-methoxycarbonyl)propyl]wyosine(37) in tRNA(Phe) + S-adenosyl-L-methionine + CO2 = wybutosine(37) in tRNA(Phe) + S-adenosyl-L-homocysteine + 2 H(+). It participates in tRNA modification; wybutosine-tRNA(Phe) biosynthesis. In terms of biological role, probable S-adenosyl-L-methionine-dependent methyltransferase that acts as a component of the wybutosine biosynthesis pathway. Wybutosine is a hyper modified guanosine with a tricyclic base found at the 3'-position adjacent to the anticodon of eukaryotic phenylalanine tRNA. May methylate the carboxyl group of leucine residues to form alpha-leucine ester residues. This Gibberella zeae (strain ATCC MYA-4620 / CBS 123657 / FGSC 9075 / NRRL 31084 / PH-1) (Wheat head blight fungus) protein is tRNA wybutosine-synthesizing protein 4 (PPM2).